A 206-amino-acid polypeptide reads, in one-letter code: Emopamil-binding protein-like (206 aa).

Helical transmembrane passes span 10-30 (EAGS…ALGL), 42-62 (WVLA…GAFV), 101-121 (LEIL…YAIV), and 165-185 (LWVY…LLLW). The EXPERA domain maps to 39 to 184 (VERWVLAWLC…LWVLIPGLLL (146 aa)).

Belongs to the EBP family. Homodimer.

It is found in the endoplasmic reticulum membrane. In terms of biological role, does not possess sterol isomerase activity and does not bind sigma ligands. This is Emopamil-binding protein-like (Ebpl) from Mus musculus (Mouse).